The following is a 414-amino-acid chain: tRNA dimethylallyltransferase (414 aa).

ATP is bound at residue 33 to 40; sequence APTASGKT. 35–40 contacts substrate; the sequence is TASGKT. Interaction with substrate tRNA regions lie at residues 58–61, 182–186, and 266–271; these read DSAL, QRITR, and RCVGYR.

The protein belongs to the IPP transferase family. Monomer. Requires Mg(2+) as cofactor.

It carries out the reaction adenosine(37) in tRNA + dimethylallyl diphosphate = N(6)-dimethylallyladenosine(37) in tRNA + diphosphate. Functionally, catalyzes the transfer of a dimethylallyl group onto the adenine at position 37 in tRNAs that read codons beginning with uridine, leading to the formation of N6-(dimethylallyl)adenosine (i(6)A). In Psychrobacter cryohalolentis (strain ATCC BAA-1226 / DSM 17306 / VKM B-2378 / K5), this protein is tRNA dimethylallyltransferase.